The primary structure comprises 121 residues: UPF0102 protein DSY2577 (121 aa).

The protein belongs to the UPF0102 family.

This chain is UPF0102 protein DSY2577, found in Desulfitobacterium hafniense (strain Y51).